Reading from the N-terminus, the 614-residue chain is Putative Na(+)/H(+) antiporter YjbQ (614 aa).

Transmembrane regions (helical) follow at residues 3–23, 32–52, 57–77, 107–127, 130–150, 163–183, 193–213, 225–244, 248–267, 282–302, 307–327, 338–358, and 368–388; these read HTSV…PILL, VVVA…NLVV, WLQT…GLEI, IFVG…LAGF, NAFL…VPTL, IILL…AVFS, MWLL…GRVF, GTIQ…LVAL, LGAE…SLLS, GFLI…WTLF, ILIM…IPVM, IFAS…AATI, and NMSG…PICF. Residues 401-519 enclose the RCK N-terminal domain; the sequence is KKTITFIGAN…EQGISIFSIL (119 aa). Residues 533-614 enclose the RCK C-terminal domain; the sequence is PGVMKLLTNQ…VTDLKKTLEG (82 aa).

It belongs to the monovalent cation:proton antiporter 2 (CPA2) transporter (TC 2.A.37) family.

The protein localises to the cell membrane. Binds cyclic di-AMP (c-di-AMP), which may regulate the transporter activity. Probable Na(+)/H(+) antiporter. This Bacillus subtilis (strain 168) protein is Putative Na(+)/H(+) antiporter YjbQ.